The following is a 995-amino-acid chain: UPF0182 protein MMAR_1371 (995 aa).

7 consecutive transmembrane segments (helical) span residues 18-38 (VLILIALGVIALLLAGPRLID), 63-83 (FLVFLVAGVLVGGIVFAGLAL), 113-133 (LFGIGIPAAIGLLAGIVAQSY), 175-195 (FVAIFLAFVANVVSHYLFGGI), 210-230 (IQLVSLVGVLVLLKAVAYWLD), 259-279 (KLILMAIAVICAAAVFSAIVL), and 287-307 (IGLVLLLLSSLIVGAAWPMIV). The interval 900 to 948 (AATGIQPTEGGAPANVPPNNAPSPEALPGTPPSPPTAVPPAPEASVTLS) is disordered. Over residues 928 to 941 (GTPPSPPTAVPPAP) the composition is skewed to pro residues.

This sequence belongs to the UPF0182 family.

The protein resides in the cell membrane. This chain is UPF0182 protein MMAR_1371, found in Mycobacterium marinum (strain ATCC BAA-535 / M).